A 220-amino-acid polypeptide reads, in one-letter code: Deoxyribose-phosphate aldolase (220 aa).

Asp-89 (proton donor/acceptor) is an active-site residue. Lys-151 (schiff-base intermediate with acetaldehyde) is an active-site residue. The Proton donor/acceptor role is filled by Lys-180.

It belongs to the DeoC/FbaB aldolase family. DeoC type 1 subfamily.

The protein resides in the cytoplasm. It carries out the reaction 2-deoxy-D-ribose 5-phosphate = D-glyceraldehyde 3-phosphate + acetaldehyde. It functions in the pathway carbohydrate degradation; 2-deoxy-D-ribose 1-phosphate degradation; D-glyceraldehyde 3-phosphate and acetaldehyde from 2-deoxy-alpha-D-ribose 1-phosphate: step 2/2. In terms of biological role, catalyzes a reversible aldol reaction between acetaldehyde and D-glyceraldehyde 3-phosphate to generate 2-deoxy-D-ribose 5-phosphate. The sequence is that of Deoxyribose-phosphate aldolase from Streptococcus mutans serotype c (strain ATCC 700610 / UA159).